Here is a 212-residue protein sequence, read N- to C-terminus: External core antigen (212 aa).

A signal peptide spans 1 to 19 (MQLFHLCLIIFCSCPTVQA). Residues 25–27 (GWL) are HBEAG. Residues 165 to 212 (NAPILSTLPETTVVRQRGRAPRRRTPSPRRRRSQSPRRRRSQSPASQC) form a disordered region. A compositionally biased stretch (basic residues) spans 180–205 (QRGRAPRRRTPSPRRRRSQSPRRRRS). The 1; half-length repeat unit spans residues 184-190 (APRRRTP). A 3 X 8 AA repeats of S-P-R-R-R-R-S-Q region spans residues 184-206 (APRRRTPSPRRRRSQSPRRRRSQ). Positions 184–212 (APRRRTPSPRRRRSQSPRRRRSQSPASQC) are excised as a propeptide. 2 repeat units span residues 191–198 (SPRRRRSQ) and 199–206 (SPRRRRSQ).

It belongs to the orthohepadnavirus precore antigen family. In terms of assembly, homodimerizes. Phosphorylated. Post-translationally, cleaved by host furin.

It localises to the secreted. The protein localises to the host nucleus. In terms of biological role, may regulate immune response to the intracellular capsid in acting as a T-cell tolerogen, by having an immunoregulatory effect which prevents destruction of infected cells by cytotoxic T-cells. This immune regulation may predispose to chronicity during perinatal infections and prevent severe liver injury during adult infections. The polypeptide is External core antigen (Hepatitis B virus genotype H subtype adw4 (isolate Nicaragua/2928Nic/1997) (HBV-H)).